A 211-amino-acid polypeptide reads, in one-letter code: Glutathione S-transferase class-mu 28 kDa isozyme (211 aa).

At alanine 2 the chain carries N-acetylalanine. Positions 4–86 (EHIKVIYFDG…YMAKKHHMMG (83 aa)) constitute a GST N-terminal domain. Residues tyrosine 10, 10–11 (YF), arginine 16, 41–45 (WPKIK), leucine 53, 55–56 (AV), and 70–71 (ES) contribute to the glutathione site. The 124-residue stretch at 88 to 211 (TDEEYYSVEK…YLSNRPATPF (124 aa)) folds into the GST C-terminal domain.

This sequence belongs to the GST superfamily. Mu family. As to quaternary structure, homodimer. As to expression, in the adult, expressed in excretory epithelial cells but absent from the caecal epithelium and flame cells. Also expressed in the tegument and its extensions into the parenchyma. In the schistosomulum, expressed in the tegument and associated structures. Not expressed in digestive tract, reproductive organs or muscles (at protein level).

The enzyme catalyses RX + glutathione = an S-substituted glutathione + a halide anion + H(+). Its function is as follows. Conjugation of reduced glutathione to a wide number of exogenous and endogenous hydrophobic electrophiles. GST isoenzymes appear to play a central role in the parasite detoxification system. Other functions are also suspected including a role in increasing the solubility of haematin in the parasite gut. This is Glutathione S-transferase class-mu 28 kDa isozyme (GST28) from Schistosoma mansoni (Blood fluke).